A 168-amino-acid chain; its full sequence is Xanthine-guanine phosphoribosyltransferase (168 aa).

5-phospho-alpha-D-ribose 1-diphosphate contacts are provided by residues 46 to 47 (RG) and 101 to 109 (DDLVDSGVT). Asp102 is a Mg(2+) binding site. Asp105 contacts guanine. Asp105 and Val148 together coordinate xanthine. Residues 105 to 109 (DSGVT) and 147 to 148 (WV) each bind GMP.

Belongs to the purine/pyrimidine phosphoribosyltransferase family. XGPT subfamily. As to quaternary structure, homotetramer. Mg(2+) serves as cofactor.

Its subcellular location is the cell inner membrane. It carries out the reaction GMP + diphosphate = guanine + 5-phospho-alpha-D-ribose 1-diphosphate. The enzyme catalyses XMP + diphosphate = xanthine + 5-phospho-alpha-D-ribose 1-diphosphate. The catalysed reaction is IMP + diphosphate = hypoxanthine + 5-phospho-alpha-D-ribose 1-diphosphate. The protein operates within purine metabolism; GMP biosynthesis via salvage pathway; GMP from guanine: step 1/1. It functions in the pathway purine metabolism; XMP biosynthesis via salvage pathway; XMP from xanthine: step 1/1. Purine salvage pathway enzyme that catalyzes the transfer of the ribosyl-5-phosphate group from 5-phospho-alpha-D-ribose 1-diphosphate (PRPP) to the N9 position of the 6-oxopurines guanine and xanthine to form the corresponding ribonucleotides GMP (guanosine 5'-monophosphate) and XMP (xanthosine 5'-monophosphate), with the release of PPi. To a lesser extent, also acts on hypoxanthine. The protein is Xanthine-guanine phosphoribosyltransferase of Gluconobacter oxydans (strain 621H) (Gluconobacter suboxydans).